Consider the following 344-residue polypeptide: Protein Tob2 (344 aa).

2 disordered regions span residues Gly-144 to Arg-169 and Met-191 to Asn-225. The span at Ser-145 to Pro-164 shows a compositional bias: low complexity. Over residues Gly-194–Gly-210 the composition is skewed to gly residues. Low complexity predominate over residues Gln-211–Asn-225. Ser-254 carries the post-translational modification Phosphoserine.

Belongs to the BTG family. Associates with CAF1. As to expression, ubiquitous.

It localises to the cytoplasm. Functionally, anti-proliferative protein inhibits cell cycle progression from the G0/G1 to S phases. The sequence is that of Protein Tob2 (TOB2) from Homo sapiens (Human).